The sequence spans 785 residues: Protein PHTF2 (785 aa).

In terms of domain architecture, PHTF spans Ile46 to Thr191. The next 2 membrane-spanning stretches (helical) occupy residues Val136–Cys156 and Ile164–Cys184. 2 disordered regions span residues Arg190–Thr239 and Arg304–Glu401. A compositionally biased stretch (basic residues) spans Gly200–Ala209. Basic and acidic residues predominate over residues Ala210–Asp219. Polar residues-rich tracts occupy residues Gly220 to Thr239 and Ala309 to Glu333. Asn329 is a glycosylation site (N-linked (GlcNAc...) asparagine). Residues Arg359–His369 show a composition bias toward basic residues. A compositionally biased stretch (low complexity) spans Ser378–Arg390. Over residues Gln391–Ser400 the composition is skewed to basic and acidic residues. The next 4 membrane-spanning stretches (helical) occupy residues Ile497–Phe517, Val553–Val573, Val634–Leu654, and Trp668–Gly688. Residues Asn697 and Asn756 are each glycosylated (N-linked (GlcNAc...) asparagine). Residues Val760–Leu780 traverse the membrane as a helical segment.

The protein resides in the membrane. The protein is Protein PHTF2 (PHTF2) of Homo sapiens (Human).